The sequence spans 95 residues: Aspartyl/glutamyl-tRNA(Asn/Gln) amidotransferase subunit C (95 aa).

The protein belongs to the GatC family. As to quaternary structure, heterotrimer of A, B and C subunits.

The enzyme catalyses L-glutamyl-tRNA(Gln) + L-glutamine + ATP + H2O = L-glutaminyl-tRNA(Gln) + L-glutamate + ADP + phosphate + H(+). The catalysed reaction is L-aspartyl-tRNA(Asn) + L-glutamine + ATP + H2O = L-asparaginyl-tRNA(Asn) + L-glutamate + ADP + phosphate + 2 H(+). Functionally, allows the formation of correctly charged Asn-tRNA(Asn) or Gln-tRNA(Gln) through the transamidation of misacylated Asp-tRNA(Asn) or Glu-tRNA(Gln) in organisms which lack either or both of asparaginyl-tRNA or glutaminyl-tRNA synthetases. The reaction takes place in the presence of glutamine and ATP through an activated phospho-Asp-tRNA(Asn) or phospho-Glu-tRNA(Gln). The protein is Aspartyl/glutamyl-tRNA(Asn/Gln) amidotransferase subunit C of Thermodesulfovibrio yellowstonii (strain ATCC 51303 / DSM 11347 / YP87).